Here is a 468-residue protein sequence, read N- to C-terminus: Nicotinamide phosphoribosyltransferase (468 aa).

Arg-180 contributes to the diphosphate binding site. Residue Asp-203 participates in beta-nicotinamide D-ribonucleotide binding. Positions 229 and 293 each coordinate diphosphate. The residue at position 229 (His-229) is a Phosphohistidine; by autocatalysis. The beta-nicotinamide D-ribonucleotide site is built by Asp-335 and Arg-373.

This sequence belongs to the NAPRTase family. As to quaternary structure, homodimer. The dimeric structure consists of two protomers arranged head to tail, with domain A on one protomer interacting with domain B on the other protomer. Phosphorylation at His-229 plays a crucial role in enhancing the substrate affinity and is important for maintaining enzymatic activity.

The enzyme catalyses beta-nicotinamide D-ribonucleotide + diphosphate = 5-phospho-alpha-D-ribose 1-diphosphate + nicotinamide + H(+). It functions in the pathway cofactor biosynthesis; NAD(+) biosynthesis; nicotinamide D-ribonucleotide from 5-phospho-alpha-D-ribose 1-diphosphate and nicotinamide: step 1/1. ATP-dependent autophosphorylation plays a vital role in nicotinamide binding and enzyme activation. Activity is inhibited by FK866. Its function is as follows. Catalyzes the condensation of nicotinamide with 5-phosphoribosyl-1-pyrophosphate to yield nicotinamide mononucleotide, an intermediate in the biosynthesis of NAD. Plays an important role in the biosynthesis of NAD via the nicotinamide (NAM) salvage pathway. Is also capable of hydrolyzing ATP and shows ATP-dependent autophosphorylation activity. This Xanthomonas campestris pv. campestris (strain 8004) protein is Nicotinamide phosphoribosyltransferase.